The chain runs to 65 residues: MIIPVRCFTCGKPLGHLYAVFKQRVLAGEHPGKVLDDLGLVRYCCRRTLMAHVEWIDDVLIYEKR.

The Zn(2+) site is built by C7, C10, C44, and C45.

The protein belongs to the archaeal Rpo10/eukaryotic RPB10 RNA polymerase subunit family. Part of the RNA polymerase complex. The cofactor is Zn(2+).

The protein resides in the cytoplasm. It carries out the reaction RNA(n) + a ribonucleoside 5'-triphosphate = RNA(n+1) + diphosphate. DNA-dependent RNA polymerase (RNAP) catalyzes the transcription of DNA into RNA using the four ribonucleoside triphosphates as substrates. The polypeptide is DNA-directed RNA polymerase subunit Rpo10 (Pyrobaculum arsenaticum (strain DSM 13514 / JCM 11321 / PZ6)).